The sequence spans 499 residues: Rhamnogalacturonan I rhamnosyltransferase 1 (499 aa).

The chain crosses the membrane as a helical; Signal-anchor for type II membrane protein span at residues 31-50 (WFVRVCSSILVWTCLVQLFA). Residues N88, N121, and N207 are each glycosylated (N-linked (GlcNAc...) asparagine). 261 to 263 (HLR) is a binding site for substrate. 3 N-linked (GlcNAc...) asparagine glycosylation sites follow: N375, N435, and N496.

This sequence belongs to the glycosyltransferase GT106 family.

Its subcellular location is the golgi apparatus membrane. It catalyses the reaction alpha-D-galacturonosyl-[(1-&gt;2)-alpha-L-rhamnosyl-(1-&gt;4)-alpha-D-galacturonosyl](n) + UDP-beta-L-rhamnose = [(1-&gt;2)-alpha-L-rhamnosyl-(1-&gt;4)-alpha-D-galacturonosyl](n+1) + UDP + H(+). It functions in the pathway glycan metabolism; pectin biosynthesis. Glycosyltransferase involved in the formation of rhamnogalacturonan I (RG-I) oligosaccharides in the seed coat mucilage, which is a specialized cell wall with abundant RG-I. Transfers the rhamnose residue from UDP-beta-L-rhamnose to RG-I oligosaccharides. This chain is Rhamnogalacturonan I rhamnosyltransferase 1, found in Arabidopsis thaliana (Mouse-ear cress).